The chain runs to 402 residues: Speedy protein E21 (402 aa).

A disordered region spans residues 1–90; it reads MDRTETRFRK…EPEKELAPEP (90 aa). Positions 16–39 are enriched in polar residues; the sequence is GKITTSRQLHPQNEQSPQRSTSGY. Positions 76-90 are enriched in acidic residues; it reads DESEEEPEKELAPEP.

Belongs to the Speedy/Ringo family.

In Homo sapiens (Human), this protein is Speedy protein E21.